Reading from the N-terminus, the 241-residue chain is Anti-Pycsar protein Apyc1 (241 aa).

A beta-lactamase-like region spans residues 17-215 (DNNNALLEQD…SVQKKTWLMH (199 aa)). Zn(2+)-binding residues include His-59, His-61, Asp-63, His-64, His-142, Asp-162, and His-215.

Belongs to the nuclease anti-Pycsar protein Apyc1 family. In terms of assembly, homodimer. Zn(2+) is required as a cofactor.

The catalysed reaction is 3',5'-cyclic CMP + H2O = CMP + H(+). The enzyme catalyses 3',5'-cyclic UMP + H2O = UMP + H(+). Functionally, counteracts the endogenous Pycsar antiviral defense system. Phosphodiesterase that enables metal-dependent hydrolysis of host cyclic nucleotide Pycsar defense signals such as cCMP and cUMP. This is Anti-Pycsar protein Apyc1 from Paenibacillus harenae.